A 264-amino-acid chain; its full sequence is MRYALAACLLLLAASSFVDAKKKKIADDELGELLDNIDADEEKKSVEPAKNPCEDHQCGWGKECVVGKKGEPTCECISKCPELDGDPMDKVCANNNQTFTSLCDLYRERCLCKRKSKECSKAFNAKVHLEYLGECKKLDECTEEHMAQFPERMADWLFQVMKELKKRRELHKLEWEELLSEAENDDEKKHVYPVIWKFCELDTKPHDKSVSHHELIPITAPVIPMESCIKPFLEGCDANNDGNISIKEWGKCLGLKEGEIQERC.

Positions 1-16 are cleaved as a signal peptide; the sequence is MRYALAACLLLLAASS. The Follistatin-like domain occupies 52–74; sequence PCEDHQCGWGKECVVGKKGEPTC. Disulfide bonds link Cys-53–Cys-64, Cys-58–Cys-74, Cys-76–Cys-110, Cys-80–Cys-103, Cys-92–Cys-135, Cys-141–Cys-228, and Cys-236–Cys-252. One can recognise a Kazal-like domain in the interval 68-137; the sequence is KKGEPTCECI…HLEYLGECKK (70 aa). The N-linked (GlcNAc...) asparagine glycan is linked to Asn-96. The EF-hand domain occupies 224–259; it reads PMESCIKPFLEGCDANNDGNISIKEWGKCLGLKEGE. 5 residues coordinate Ca(2+): Asp-237, Asn-239, Asp-241, Asn-243, and Glu-248. Asn-243 carries N-linked (GlcNAc...) asparagine glycosylation.

This sequence belongs to the SPARC family. Expressed by body wall and sex muscle cells. Probable association with basement membranes.

The protein localises to the secreted. It localises to the extracellular space. Its subcellular location is the extracellular matrix. It is found in the basement membrane. Its function is as follows. Has a high affinity for collagen. Affects nematode body morphology and mobility. Essential for C.elegans development and muscle function. The cysteine-rich region could have protease inhibitory activity or may provide the framework for a protein binding module. Probable role in skeletal morphogenesis. This is SPARC (ost-1) from Caenorhabditis elegans.